A 136-amino-acid polypeptide reads, in one-letter code: MALYEHIFLARQDIAPQQVDELLSLYKSVIEAHGGKVGRVENWGLRPLAYRIRKNRKAYYVLINIDAPATAIAEVERQMHINEDILRYMTVRVEKHEKEKSAMFSRLDRNGHIGLDEERSRSSRRQREDVIEGVEL.

A compositionally biased stretch (basic and acidic residues) spans 117–130 (EERSRSSRRQREDV). The segment at 117–136 (EERSRSSRRQREDVIEGVEL) is disordered.

The protein belongs to the bacterial ribosomal protein bS6 family.

Its function is as follows. Binds together with bS18 to 16S ribosomal RNA. The chain is Small ribosomal subunit protein bS6 from Bartonella quintana (strain Toulouse) (Rochalimaea quintana).